The following is a 480-amino-acid chain: UDP-N-acetylmuramate--L-alanine ligase (480 aa).

An ATP-binding site is contributed by 129-135; it reads GSHGKTT.

The protein belongs to the MurCDEF family.

Its subcellular location is the cytoplasm. It carries out the reaction UDP-N-acetyl-alpha-D-muramate + L-alanine + ATP = UDP-N-acetyl-alpha-D-muramoyl-L-alanine + ADP + phosphate + H(+). It functions in the pathway cell wall biogenesis; peptidoglycan biosynthesis. Cell wall formation. This Syntrophus aciditrophicus (strain SB) protein is UDP-N-acetylmuramate--L-alanine ligase.